The primary structure comprises 377 residues: UDP-N-acetylglucosamine 2-epimerase (377 aa).

His212 is a catalytic residue.

This sequence belongs to the UDP-N-acetylglucosamine 2-epimerase family. In terms of assembly, homodimer.

It carries out the reaction UDP-N-acetyl-alpha-D-glucosamine + H2O = aldehydo-N-acetyl-D-mannosamine + UDP + H(+). Catalyzes the conversion of UDP-N-acetylglucosamine (UDP-GlcNAc) to UDP and N-acetyl-D-mannosamine (ManNAc). This Neisseria meningitidis serogroup B (strain ATCC BAA-335 / MC58) protein is UDP-N-acetylglucosamine 2-epimerase (siaA).